A 281-amino-acid polypeptide reads, in one-letter code: MTDVMRDVASLRMLQGMWRRAGETVGLVPTMGALHDGHMALARAAREECGKVIATIFVNPTQFGPTEDLDAYPNTFDSDLHMLREVGVDVVFAPTRDVMYPAGFGTTVKVAGLTAPLCGAARPGHFDGVTQVVAKLLNLGQADRAYFGQKDWQQLAVVRQMVRDLNFPTEIVGIPTVRAEDGLALSSRNAYLTEAEREIAPILYRTIRDAAARVAAGHGATGVCEAAARGLLGKGFTRIDYLECRDATTLAPAETPDPGTARIFVAAQLGGARLIDNVSVG.

31-38 (MGALHDGH) contributes to the ATP binding site. Catalysis depends on His38, which acts as the Proton donor. Gln62 is a binding site for (R)-pantoate. Gln62 provides a ligand contact to beta-alanine. ATP is bound at residue 148-151 (GQKD). Gln154 serves as a coordination point for (R)-pantoate. ATP-binding positions include Val177 and 185 to 188 (LSSR).

It belongs to the pantothenate synthetase family. As to quaternary structure, homodimer.

The protein resides in the cytoplasm. It carries out the reaction (R)-pantoate + beta-alanine + ATP = (R)-pantothenate + AMP + diphosphate + H(+). The protein operates within cofactor biosynthesis; (R)-pantothenate biosynthesis; (R)-pantothenate from (R)-pantoate and beta-alanine: step 1/1. Functionally, catalyzes the condensation of pantoate with beta-alanine in an ATP-dependent reaction via a pantoyl-adenylate intermediate. This chain is Pantothenate synthetase, found in Dinoroseobacter shibae (strain DSM 16493 / NCIMB 14021 / DFL 12).